The primary structure comprises 74 residues: Defensin (74 aa).

Residues 1–21 (MRGIYICLVFVLVCGLVSGLA) form the signal peptide. Residues 22 to 34 (DVPAESEMAHLRV) constitute a propeptide that is removed on maturation. 3 disulfides stabilise this stretch: Cys-40–Cys-61, Cys-47–Cys-69, and Cys-51–Cys-71.

As to expression, expressed in the hemocytes, fat body and ovaries.

It is found in the secreted. In terms of biological role, antibacterial peptide mostly active against Gram-positive bacteria. This chain is Defensin, found in Rhipicephalus microplus (Cattle tick).